Reading from the N-terminus, the 397-residue chain is MKHVLRKEKTLEISATLVLKDGTIFYGKSVGIQGETYGEIVFNTSMTGYQEILTDPSYSNQIITFTYPHIGNVGINKNDCESNVIHAKGLIVRDISSIYSNHRSQMSLLNYLLNQKIIVISNIDTRKLTRILRTTGSQYGYITTKKIHSIINVLKHINILDNPITNKDLVKQVSTKKFYIWKKNVNKQKNNNITNAKLKEKIWHVVVYDFGVKKNILNMLTHRNCYLTVIPADTSAEKVLQILPDGIFLSNGPGDPRSCTYALNAINAFLKINIPIFGICLGHQLLALASGAKIIKMKFGHHGSNHPVKELKSNTVMITSQNHNYTVDTNNLPKNINITHISLFDGSIQGLQRNDKHAFSFQGHPEASPGPHDSMILFDKFIKLMKKSYNSQQKTII.

The tract at residues 1-204 is CPSase; it reads MKHVLRKEKT…NAKLKEKIWH (204 aa). L-glutamine-binding residues include Ser57, Gly252, and Gly254. In terms of domain architecture, Glutamine amidotransferase type-1 spans 204–391; that stretch reads HVVVYDFGVK…IKLMKKSYNS (188 aa). Residue Cys280 is the Nucleophile of the active site. Residues Leu281, Gln284, Asn322, and Tyr325 each contribute to the L-glutamine site. Active-site residues include His364 and Glu366.

It belongs to the CarA family. Composed of two chains; the small (or glutamine) chain promotes the hydrolysis of glutamine to ammonia, which is used by the large (or ammonia) chain to synthesize carbamoyl phosphate. Tetramer of heterodimers (alpha,beta)4.

It catalyses the reaction hydrogencarbonate + L-glutamine + 2 ATP + H2O = carbamoyl phosphate + L-glutamate + 2 ADP + phosphate + 2 H(+). The enzyme catalyses L-glutamine + H2O = L-glutamate + NH4(+). The protein operates within amino-acid biosynthesis; L-arginine biosynthesis; carbamoyl phosphate from bicarbonate: step 1/1. Its pathway is pyrimidine metabolism; UMP biosynthesis via de novo pathway; (S)-dihydroorotate from bicarbonate: step 1/3. Its function is as follows. Small subunit of the glutamine-dependent carbamoyl phosphate synthetase (CPSase). CPSase catalyzes the formation of carbamoyl phosphate from the ammonia moiety of glutamine, carbonate, and phosphate donated by ATP, constituting the first step of 2 biosynthetic pathways, one leading to arginine and/or urea and the other to pyrimidine nucleotides. The small subunit (glutamine amidotransferase) binds and cleaves glutamine to supply the large subunit with the substrate ammonia. This chain is Carbamoyl phosphate synthase small chain, found in Buchnera aphidicola subsp. Baizongia pistaciae (strain Bp).